Here is a 190-residue protein sequence, read N- to C-terminus: MAKATTIKEALARWEEKTSQKPSEAREIKLYAQIPPIEKMDASLSTLSNCEKLSLSTNCIEKIANLNGLKNLRILSLGRNNIKNLNGLEAVGDTLEELWISYNFIEKLKGIHVMKKLKILYMSNNLVKDWAEFVKLAELPCLEDLVFVGNPLEEKHSAEGNWVEEATKRVPKLKKLDGTPVIKEDEEEDN.

Residue alanine 2 is modified to N-acetylalanine. 4 LRR repeats span residues 49–70, 71–92, 94–115, and 116–137; these read NCEK…NGLK, NLRI…EAVG, TLEE…HVMK, and KLKI…VKLA. The residue at position 56 (serine 56) is a Phosphoserine. One can recognise an LRRCT domain in the interval 150 to 190; that stretch reads NPLEEKHSAEGNWVEEATKRVPKLKKLDGTPVIKEDEEEDN.

This sequence belongs to the dynein light chain LC1-type family. As to quaternary structure, interacts with ZMYND10 (via C-terminus). Interacts with DNAH5, a outer arm dynein heavy chain. Interacts with tubulin located within the A-tubule of the outer doublets in a ATP-independent manner.

The protein localises to the cytoplasm. The protein resides in the cytoskeleton. It localises to the cilium axoneme. In terms of biological role, part of the multisubunit axonemal ATPase complexes that generate the force for cilia motility and govern beat frequency. Component of the outer arm dynein (ODA). May be involved in a mechanosensory feedback mechanism controlling ODA activity based on external conformational cues by tethering the outer arm dynein heavy chain (DNAH5) to the microtubule within the axoneme. Important for ciliary function in the airways and for the function of the cilia that produce the nodal flow essential for the determination of the left-right asymmetry. This Bos taurus (Bovine) protein is Dynein axonemal light chain 1 (DNAL1).